Reading from the N-terminus, the 258-residue chain is Cell division protein FtsQ (258 aa).

Topologically, residues 1–29 (MAKNAPAPRGARRKPVKKVGVPLRERVAT) are cytoplasmic. Residues 30 to 50 (AVPWMLVGSVAMVSLLAVIYL) traverse the membrane as a helical segment. The Periplasmic portion of the chain corresponds to 51-258 (PAALDGYPIR…MAVTWREQQS (208 aa)). Residues 57–127 (YPIRKVGVDG…DTVVLTVEER (71 aa)) form the POTRA domain.

The protein belongs to the FtsQ/DivIB family. FtsQ subfamily. In terms of assembly, part of a complex composed of FtsB, FtsL and FtsQ.

It is found in the cell inner membrane. Essential cell division protein. May link together the upstream cell division proteins, which are predominantly cytoplasmic, with the downstream cell division proteins, which are predominantly periplasmic. May control correct divisome assembly. This chain is Cell division protein FtsQ, found in Alcanivorax borkumensis (strain ATCC 700651 / DSM 11573 / NCIMB 13689 / SK2).